The primary structure comprises 547 residues: Glucose-6-phosphate isomerase 2 (547 aa).

Residue Glu-351 is the Proton donor of the active site. Residues His-382 and Lys-508 contribute to the active site.

Belongs to the GPI family.

Its subcellular location is the cytoplasm. The catalysed reaction is alpha-D-glucose 6-phosphate = beta-D-fructose 6-phosphate. Its pathway is carbohydrate biosynthesis; gluconeogenesis. It participates in carbohydrate degradation; glycolysis; D-glyceraldehyde 3-phosphate and glycerone phosphate from D-glucose: step 2/4. Catalyzes the reversible isomerization of glucose-6-phosphate to fructose-6-phosphate. The polypeptide is Glucose-6-phosphate isomerase 2 (Neisseria meningitidis serogroup A / serotype 4A (strain DSM 15465 / Z2491)).